The following is a 554-amino-acid chain: 3-(3-hydroxy-phenyl)propionate/3-hydroxycinnamic acid hydroxylase (554 aa).

FAD is bound by residues 17 to 46 (QVAIAGAGPVGLMMANYLGQMGIDVLVVEK) and 285 to 295 (FRIDRVLLAGD).

This sequence belongs to the PheA/TfdB FAD monooxygenase family. The cofactor is FAD.

The enzyme catalyses 3-(3-hydroxyphenyl)propanoate + NADH + O2 + H(+) = 3-(2,3-dihydroxyphenyl)propanoate + NAD(+) + H2O. It catalyses the reaction (2E)-3-(3-hydroxyphenyl)prop-2-enoate + NADH + O2 + H(+) = (2E)-3-(2,3-dihydroxyphenyl)prop-2-enoate + NAD(+) + H2O. It participates in aromatic compound metabolism; 3-phenylpropanoate degradation. In terms of biological role, catalyzes the insertion of one atom of molecular oxygen into position 2 of the phenyl ring of 3-(3-hydroxyphenyl)propionate (3-HPP) and hydroxycinnamic acid (3HCI). The sequence is that of 3-(3-hydroxy-phenyl)propionate/3-hydroxycinnamic acid hydroxylase from Escherichia coli (strain 55989 / EAEC).